A 213-amino-acid polypeptide reads, in one-letter code: Ribonuclease HII (213 aa).

In terms of domain architecture, RNase H type-2 spans His27–Pro213. A divalent metal cation is bound by residues Asp33, Glu34, and Asp125.

Belongs to the RNase HII family. Mn(2+) serves as cofactor. It depends on Mg(2+) as a cofactor.

The protein resides in the cytoplasm. The enzyme catalyses Endonucleolytic cleavage to 5'-phosphomonoester.. Endonuclease that specifically degrades the RNA of RNA-DNA hybrids. This Geobacter metallireducens (strain ATCC 53774 / DSM 7210 / GS-15) protein is Ribonuclease HII.